A 400-amino-acid polypeptide reads, in one-letter code: GTPase Obg (400 aa).

The Obg domain maps to 1-159 (MKFVDEVQIR…RTLKLELLLL (159 aa)). The OBG-type G domain occupies 160 to 333 (ADVGMLGLPN…VCYDILDLLD (174 aa)). GTP contacts are provided by residues 166 to 173 (GLPNAGKS), 191 to 195 (FTTLV), 213 to 216 (DIPG), 283 to 286 (NKMD), and 314 to 316 (TAI). Mg(2+)-binding residues include serine 173 and threonine 193.

This sequence belongs to the TRAFAC class OBG-HflX-like GTPase superfamily. OBG GTPase family. In terms of assembly, monomer. The cofactor is Mg(2+).

The protein resides in the cytoplasm. An essential GTPase which binds GTP, GDP and possibly (p)ppGpp with moderate affinity, with high nucleotide exchange rates and a fairly low GTP hydrolysis rate. Plays a role in control of the cell cycle, stress response, ribosome biogenesis and in those bacteria that undergo differentiation, in morphogenesis control. The sequence is that of GTPase Obg from Aeromonas hydrophila subsp. hydrophila (strain ATCC 7966 / DSM 30187 / BCRC 13018 / CCUG 14551 / JCM 1027 / KCTC 2358 / NCIMB 9240 / NCTC 8049).